The sequence spans 141 residues: Lutropin subunit beta (141 aa).

The N-terminal stretch at 1–20 (MEMLQGLLLLLLLSMGGAWA) is a signal peptide. Cystine bridges form between cysteine 29–cysteine 77, cysteine 43–cysteine 92, cysteine 46–cysteine 130, cysteine 54–cysteine 108, cysteine 58–cysteine 110, and cysteine 113–cysteine 120. N-linked (GlcNAc...) asparagine glycans are attached at residues asparagine 33 and asparagine 50.

The protein belongs to the glycoprotein hormones subunit beta family. In terms of assembly, heterodimer of a common alpha chain and a unique beta chain which confers biological specificity to thyrotropin, lutropin, follitropin and gonadotropin.

It localises to the secreted. Promotes spermatogenesis and ovulation by stimulating the testes and ovaries to synthesize steroids. This is Lutropin subunit beta (LHB) from Gorilla gorilla gorilla (Western lowland gorilla).